Here is a 151-residue protein sequence, read N- to C-terminus: Methylated-DNA--protein-cysteine methyltransferase (151 aa).

Catalysis depends on Cys119, which acts as the Nucleophile; methyl group acceptor.

This sequence belongs to the MGMT family.

The protein resides in the cytoplasm. It catalyses the reaction a 6-O-methyl-2'-deoxyguanosine in DNA + L-cysteinyl-[protein] = S-methyl-L-cysteinyl-[protein] + a 2'-deoxyguanosine in DNA. The catalysed reaction is a 4-O-methyl-thymidine in DNA + L-cysteinyl-[protein] = a thymidine in DNA + S-methyl-L-cysteinyl-[protein]. Its function is as follows. Involved in the cellular defense against the biological effects of O6-methylguanine (O6-MeG) and O4-methylthymine (O4-MeT) in DNA. Repairs the methylated nucleobase in DNA by stoichiometrically transferring the methyl group to a cysteine residue in the enzyme. This is a suicide reaction: the enzyme is irreversibly inactivated. This Saccharolobus islandicus (strain L.S.2.15 / Lassen #1) (Sulfolobus islandicus) protein is Methylated-DNA--protein-cysteine methyltransferase.